A 193-amino-acid polypeptide reads, in one-letter code: ATP-dependent Clp protease proteolytic subunit (193 aa).

Residue S98 is the Nucleophile of the active site. H123 is a catalytic residue.

This sequence belongs to the peptidase S14 family. Fourteen ClpP subunits assemble into 2 heptameric rings which stack back to back to give a disk-like structure with a central cavity, resembling the structure of eukaryotic proteasomes.

Its subcellular location is the cytoplasm. It catalyses the reaction Hydrolysis of proteins to small peptides in the presence of ATP and magnesium. alpha-casein is the usual test substrate. In the absence of ATP, only oligopeptides shorter than five residues are hydrolyzed (such as succinyl-Leu-Tyr-|-NHMec, and Leu-Tyr-Leu-|-Tyr-Trp, in which cleavage of the -Tyr-|-Leu- and -Tyr-|-Trp bonds also occurs).. Its function is as follows. Cleaves peptides in various proteins in a process that requires ATP hydrolysis. Has a chymotrypsin-like activity. Plays a major role in the degradation of misfolded proteins. The protein is ATP-dependent Clp protease proteolytic subunit of Clostridium acetobutylicum (strain ATCC 824 / DSM 792 / JCM 1419 / IAM 19013 / LMG 5710 / NBRC 13948 / NRRL B-527 / VKM B-1787 / 2291 / W).